Here is a 218-residue protein sequence, read N- to C-terminus: Guanylate kinase (218 aa).

Positions Gly-10–Thr-190 constitute a Guanylate kinase-like domain. Ser-17–Ser-24 provides a ligand contact to ATP.

The protein belongs to the guanylate kinase family.

It localises to the cytoplasm. The enzyme catalyses GMP + ATP = GDP + ADP. Its function is as follows. Essential for recycling GMP and indirectly, cGMP. This is Guanylate kinase from Jannaschia sp. (strain CCS1).